Reading from the N-terminus, the 109-residue chain is Cell division protein ZapA (109 aa).

Residues 22–99 (EQQDALNMAA…IEQALLEQGR (78 aa)) adopt a coiled-coil conformation.

It belongs to the ZapA family. Type 1 subfamily. In terms of assembly, homodimer. Interacts with FtsZ.

The protein localises to the cytoplasm. Its function is as follows. Activator of cell division through the inhibition of FtsZ GTPase activity, therefore promoting FtsZ assembly into bundles of protofilaments necessary for the formation of the division Z ring. It is recruited early at mid-cell but it is not essential for cell division. This Yersinia pseudotuberculosis serotype O:1b (strain IP 31758) protein is Cell division protein ZapA.